The following is a 186-amino-acid chain: Nuclear transcription factor Y subunit C-5 (186 aa).

The disordered stretch occupies residues 166–186; the sequence is QMPGAWTEEDATGANGGNGGN.

The protein belongs to the NFYC/HAP5 subunit family. As to quaternary structure, heterotrimeric transcription factor composed of three components, NF-YA, NF-YB and NF-YC. NF-YB and NF-YC must interact and dimerize for NF-YA association and DNA binding. Expressed in inflorescences and flowers.

The protein localises to the nucleus. Functionally, stimulates the transcription of various genes by recognizing and binding to a CCAAT motif in promoters. This Arabidopsis thaliana (Mouse-ear cress) protein is Nuclear transcription factor Y subunit C-5 (NFYC5).